Consider the following 954-residue polypeptide: Kinesin-like protein KIN-14Q (954 aa).

Positions 33 to 155 constitute a Calponin-homology (CH) domain; sequence AMRRYDAASW…CVLALKSFSE (123 aa). The region spanning 374–699 is the Kinesin motor domain; sequence NIRVYCRVRP…LKFAERVASV (326 aa). Position 457–464 (457–464) interacts with ATP; sequence GQTGSGKT. The stretch at 704 to 733 forms a coiled coil; that stretch reads AKANKEGSEVRELKEQIATLKAALAKKEGE. Residues 844-855 are compositionally biased toward basic and acidic residues; sequence YDPDKQRRRAEP. Disordered stretches follow at residues 844–876 and 912–954; these read YDPD…DQEM and PNLA…NTPK. Low complexity predominate over residues 864-873; sequence FDAATSSPSD. A compositionally biased stretch (polar residues) spans 928 to 954; it reads PIRNSKQLPFSTTGGRRTRNGKINTPK.

This sequence belongs to the TRAFAC class myosin-kinesin ATPase superfamily. Kinesin family. KIN-14 subfamily. As to quaternary structure, forms oligomers in vitro. Interacts with actin microfilaments. Binds to actin in vitro through its calponin-homology (CH) domain. As to expression, expressed in primary leaf, primary root, developing flower and coleoptile.

The protein localises to the cytoplasm. Its subcellular location is the cytoskeleton. Its activity is regulated as follows. The microtubule-dependent ATPase activity is regulated by actin binding. Functionally, minus end-directed motor protein that transports actin filaments along microtubules. Plays a central role in the polar orientation of actin filaments along microtubules, and thus a contribution to the organization of the cytoskeletal architecture. Links the actin microfilaments with the cortical microtubules in both cycling and non-cycling cells. Required for efficient cell elongation by its participation in the premitotic nuclear positioning. The protein is Kinesin-like protein KIN-14Q of Oryza sativa subsp. japonica (Rice).